A 652-amino-acid chain; its full sequence is Sodium-dependent nutrient amino acid transporter 1 (652 aa).

The tract at residues 1 to 54 (MELKGVHQQNGTSNGTGAVGAEGESAPPTAPATAEAAASLETTTEKVDAEQQKP) is disordered. At 1–58 (MELKGVHQQNGTSNGTGAVGAEGESAPPTAPATAEAAASLETTTEKVDAEQQKPERTN) the chain is on the cytoplasmic side. The segment covering 7-16 (HQQNGTSNGT) has biased composition (polar residues). A compositionally biased stretch (low complexity) spans 21–42 (AEGESAPPTAPATAEAAASLET). The segment covering 43–54 (TTEKVDAEQQKP) has biased composition (basic and acidic residues). 4 helical membrane-spanning segments follow: residues 59 to 79 (WGNG…LGNV), 92 to 112 (GAFL…MYYL), 130 to 150 (VVPG…CIIT), and 155 to 175 (LLAL…PWSY). Asn201 and Asn204 each carry an N-linked (GlcNAc...) asparagine glycan. 9 consecutive transmembrane segments (helical) span residues 240-260 (PDWK…LVIM), 269-289 (AAYF…VRAV), 318-338 (AVVQ…MFAS), 352-372 (IVTT…FAIL), 412-432 (LFSV…IVAL), 458-478 (ICGF…ILTL), 485-505 (TYVV…IYGM), 527-547 (CWSF…MVTI), and 564-584 (AGWL…MWYI).

The protein belongs to the sodium:neurotransmitter symporter (SNF) (TC 2.A.22) family.

It localises to the membrane. Its function is as follows. Unusual broad substrate spectrum amino acid:sodium cotransporter that promotes absorption of the D isomers of essential amino acids. Neutral amino acids are the preferred substrates, especially methionine and phenylalanine. In Drosophila persimilis (Fruit fly), this protein is Sodium-dependent nutrient amino acid transporter 1.